A 348-amino-acid chain; its full sequence is Pyruvate dehydrogenase E1 component subunit alpha (348 aa).

Residues 1 to 21 are disordered; sequence MAPRKSASVSSRKTAAKPAKK.

In terms of assembly, heterodimer of an alpha and a beta chain. It depends on thiamine diphosphate as a cofactor.

It carries out the reaction N(6)-[(R)-lipoyl]-L-lysyl-[protein] + pyruvate + H(+) = N(6)-[(R)-S(8)-acetyldihydrolipoyl]-L-lysyl-[protein] + CO2. Functionally, the pyruvate dehydrogenase complex catalyzes the overall conversion of pyruvate to acetyl-CoA and CO(2). It contains multiple copies of three enzymatic components: pyruvate dehydrogenase (E1), dihydrolipoamide acetyltransferase (E2) and lipoamide dehydrogenase (E3). This Rhizobium meliloti (strain 1021) (Ensifer meliloti) protein is Pyruvate dehydrogenase E1 component subunit alpha (pdhA).